Consider the following 208-residue polypeptide: dITP/XTP pyrophosphatase (208 aa).

15–20 (SHNAGK) serves as a coordination point for substrate. Residues glutamate 47 and aspartate 76 each coordinate Mg(2+). Catalysis depends on aspartate 76, which acts as the Proton acceptor. Substrate-binding positions include serine 77, 157 to 160 (HGYD), lysine 180, and 185 to 186 (HR).

This sequence belongs to the HAM1 NTPase family. As to quaternary structure, homodimer. Mg(2+) is required as a cofactor.

It carries out the reaction XTP + H2O = XMP + diphosphate + H(+). The catalysed reaction is dITP + H2O = dIMP + diphosphate + H(+). It catalyses the reaction ITP + H2O = IMP + diphosphate + H(+). Its function is as follows. Pyrophosphatase that catalyzes the hydrolysis of nucleoside triphosphates to their monophosphate derivatives, with a high preference for the non-canonical purine nucleotides XTP (xanthosine triphosphate), dITP (deoxyinosine triphosphate) and ITP. Seems to function as a house-cleaning enzyme that removes non-canonical purine nucleotides from the nucleotide pool, thus preventing their incorporation into DNA/RNA and avoiding chromosomal lesions. This is dITP/XTP pyrophosphatase from Gluconobacter oxydans (strain 621H) (Gluconobacter suboxydans).